A 373-amino-acid polypeptide reads, in one-letter code: MAKIMVAMSGGVDSSLAAALLHEAGHDVTGVTLHLWEGDDDRLAESLCCSQEMTESARRVCAQLGIPYYVFNYQREFRRYVIEYFLREYASGFTPNPCLECNREIKFRALLARARTLGFDYVATGHYARIRADETRHNGEDAGLPPAERAQRTTYRLLRAVDREKDQSYMLYMLGQDDLARLIFPIGEYTKAEVRAMAAARGLASANRPESQDICFVPGGDYRNLLREERPDALRPGPILDLEGREVGRHQGLPLYTIGQRRGLGIATGQPMYVTALDVARNAVIVGPESALRRESLRAEWVTFVSGMWPEAPFDCLAQIRAHADAVPARVIPGEAGTVDVHFSRPQRAVTPGQAIVFYDGDVVLGGGRIARD.

ATP is bound by residues 7–14 (AMSGGVDS) and L33. C101 functions as the Nucleophile in the catalytic mechanism. A disulfide bridge connects residues C101 and C215. An ATP-binding site is contributed by G125. An interaction with tRNA region spans residues 165–167 (KDQ). C215 functions as the Cysteine persulfide intermediate in the catalytic mechanism.

This sequence belongs to the MnmA/TRMU family.

It is found in the cytoplasm. It carries out the reaction S-sulfanyl-L-cysteinyl-[protein] + uridine(34) in tRNA + AH2 + ATP = 2-thiouridine(34) in tRNA + L-cysteinyl-[protein] + A + AMP + diphosphate + H(+). In terms of biological role, catalyzes the 2-thiolation of uridine at the wobble position (U34) of tRNA, leading to the formation of s(2)U34. This is tRNA-specific 2-thiouridylase MnmA from Roseiflexus sp. (strain RS-1).